Here is a 102-residue protein sequence, read N- to C-terminus: Small ribosomal subunit protein uS10 (102 aa).

This sequence belongs to the universal ribosomal protein uS10 family. Part of the 30S ribosomal subunit.

Involved in the binding of tRNA to the ribosomes. The protein is Small ribosomal subunit protein uS10 of Streptococcus pyogenes serotype M3 (strain SSI-1).